The primary structure comprises 157 residues: Transcriptional regulator AzlB (157 aa).

One can recognise an HTH asnC-type domain in the interval 5–66 (LDETDKAILR…IVDEKKLGIE (62 aa)). The segment at residues 24–43 (NLNLSKKIGLSPSACLARTK) is a DNA-binding region (H-T-H motif).

Its function is as follows. Transcriptional repressor of the azlBCD operon involved in branched-chain amino acid transport. This Bacillus subtilis (strain 168) protein is Transcriptional regulator AzlB (azlB).